The following is a 371-amino-acid chain: Maltose/maltodextrin import ATP-binding protein MalK (371 aa).

One can recognise an ABC transporter domain in the interval 4 to 234 (VQLQNVTKAW…PADRFVAGFI (231 aa)). 36–43 (GPSGCGKS) lines the ATP pocket.

Belongs to the ABC transporter superfamily. Maltooligosaccharide importer (TC 3.A.1.1.1) family. The complex is composed of two ATP-binding proteins (MalK), two transmembrane proteins (MalG and MalK) and a solute-binding protein (MalE).

The protein localises to the cell inner membrane. The catalysed reaction is D-maltose(out) + ATP + H2O = D-maltose(in) + ADP + phosphate + H(+). In terms of biological role, part of the ABC transporter complex MalEFGK involved in maltose/maltodextrin import. Responsible for energy coupling to the transport system. The chain is Maltose/maltodextrin import ATP-binding protein MalK from Escherichia coli O157:H7.